Consider the following 263-residue polypeptide: Proteasome subunit alpha type-1 (263 aa).

At methionine 1 the chain carries N-acetylmethionine. Residue serine 110 is modified to Phosphoserine; alternate. Serine 110 is a glycosylation site (O-linked (GlcNAc) serine; alternate). A Glycyl lysine isopeptide (Lys-Gly) (interchain with G-Cter in ubiquitin) cross-link involves residue lysine 115. At serine 177 the chain carries Phosphoserine. Lysine 208 participates in a covalent cross-link: Glycyl lysine isopeptide (Lys-Gly) (interchain with G-Cter in ubiquitin). The interval 232-263 is disordered; that stretch reads FLEGLEERPQRKAQPTQPADEPAEKADEPMEH. Positions 253–263 are enriched in basic and acidic residues; it reads PAEKADEPMEH.

This sequence belongs to the peptidase T1A family. The 26S proteasome consists of a 20S proteasome core and two 19S regulatory subunits. The 20S proteasome core is a barrel-shaped complex made of 28 subunits that are arranged in four stacked rings. The two outer rings are each formed by seven alpha subunits, and the two inner rings are formed by seven beta subunits. The proteolytic activity is exerted by three beta-subunits PSMB5, PSMB6 and PSMB7. Interacts with NOTCH3. Interacts with ZFAND1.

Its subcellular location is the cytoplasm. It localises to the nucleus. In terms of biological role, component of the 20S core proteasome complex involved in the proteolytic degradation of most intracellular proteins. This complex plays numerous essential roles within the cell by associating with different regulatory particles. Associated with two 19S regulatory particles, forms the 26S proteasome and thus participates in the ATP-dependent degradation of ubiquitinated proteins. The 26S proteasome plays a key role in the maintenance of protein homeostasis by removing misfolded or damaged proteins that could impair cellular functions, and by removing proteins whose functions are no longer required. Associated with the PA200 or PA28, the 20S proteasome mediates ubiquitin-independent protein degradation. This type of proteolysis is required in several pathways including spermatogenesis (20S-PA200 complex) or generation of a subset of MHC class I-presented antigenic peptides (20S-PA28 complex). The chain is Proteasome subunit alpha type-1 (PSMA1) from Bos taurus (Bovine).